A 548-amino-acid polypeptide reads, in one-letter code: Glucose-6-phosphate isomerase (548 aa).

Catalysis depends on glutamate 355, which acts as the Proton donor. Residues histidine 386 and lysine 514 contribute to the active site.

This sequence belongs to the GPI family.

Its subcellular location is the cytoplasm. It catalyses the reaction alpha-D-glucose 6-phosphate = beta-D-fructose 6-phosphate. Its pathway is carbohydrate biosynthesis; gluconeogenesis. It participates in carbohydrate degradation; glycolysis; D-glyceraldehyde 3-phosphate and glycerone phosphate from D-glucose: step 2/4. In terms of biological role, catalyzes the reversible isomerization of glucose-6-phosphate to fructose-6-phosphate. The protein is Glucose-6-phosphate isomerase of Proteus mirabilis (strain HI4320).